The primary structure comprises 204 residues: Probable GTP-binding protein EngB (204 aa).

Residues 1 to 21 (MKVSSAEFVTSGTRPAHYPPP) form a disordered region. One can recognise an EngB-type G domain in the interval 22–194 (ELPEVAFAGR…WARIEVMLAA (173 aa)). Residues 30 to 37 (GRSNVGKS), 57 to 61 (GRTQL), 75 to 78 (DLPG), 142 to 145 (TKCD), and 173 to 175 (FSA) contribute to the GTP site. The Mg(2+) site is built by Ser-37 and Thr-59.

The protein belongs to the TRAFAC class TrmE-Era-EngA-EngB-Septin-like GTPase superfamily. EngB GTPase family. Mg(2+) serves as cofactor.

Necessary for normal cell division and for the maintenance of normal septation. This Geobacter metallireducens (strain ATCC 53774 / DSM 7210 / GS-15) protein is Probable GTP-binding protein EngB.